The following is a 566-amino-acid chain: Proline--tRNA ligase (566 aa).

The protein belongs to the class-II aminoacyl-tRNA synthetase family. ProS type 1 subfamily. Homodimer.

The protein localises to the cytoplasm. The catalysed reaction is tRNA(Pro) + L-proline + ATP = L-prolyl-tRNA(Pro) + AMP + diphosphate. Its function is as follows. Catalyzes the attachment of proline to tRNA(Pro) in a two-step reaction: proline is first activated by ATP to form Pro-AMP and then transferred to the acceptor end of tRNA(Pro). As ProRS can inadvertently accommodate and process non-cognate amino acids such as alanine and cysteine, to avoid such errors it has two additional distinct editing activities against alanine. One activity is designated as 'pretransfer' editing and involves the tRNA(Pro)-independent hydrolysis of activated Ala-AMP. The other activity is designated 'posttransfer' editing and involves deacylation of mischarged Ala-tRNA(Pro). The misacylated Cys-tRNA(Pro) is not edited by ProRS. This Bacillus cereus (strain Q1) protein is Proline--tRNA ligase.